The sequence spans 426 residues: uncharacterized protein (426 aa).

Solcar repeat units lie at residues 125 to 216, 226 to 315, and 334 to 422; these read KNNV…MKRV, HSPL…LKRT, and PNGL…CKKW. 6 consecutive transmembrane segments (helical) span residues 130–151, 193–213, 229–249, 290–310, 336–356, and 394–415; these read YFISGGIAGIVSRTCTAPLDRL, GINVLKVMPESSIKFGTYEAM, LYSYLAGGMAGSVAQMFIYPV, GVLVGILGMFPYSATDLGTFE, GLVMAFGALSGSTGATIVFPL, and LYKGLSPNLLKVAPSVAISYLV.

It belongs to the mitochondrial carrier (TC 2.A.29) family.

The protein localises to the mitochondrion inner membrane. This is an uncharacterized protein from Schizosaccharomyces pombe (strain 972 / ATCC 24843) (Fission yeast).